The sequence spans 266 residues: Ribonuclease 3 (266 aa).

Residues 1–35 form a disordered region; that stretch reads MMDESADIKPVPTSEDVAAPSGTEPVAPAPKKKRA. Residues 43–171 enclose the RNase III domain; the sequence is MAAIEQRLGH…VIGAVYLDGG (129 aa). Glu84 serves as a coordination point for Mg(2+). Asp88 is an active-site residue. Positions 157 and 160 each coordinate Mg(2+). Residue Glu160 is part of the active site. In terms of domain architecture, DRBM spans 196-265; the sequence is DPKTVLQEWA…ASAMIVREGV (70 aa).

It belongs to the ribonuclease III family. In terms of assembly, homodimer. Mg(2+) serves as cofactor.

The protein localises to the cytoplasm. It catalyses the reaction Endonucleolytic cleavage to 5'-phosphomonoester.. Functionally, digests double-stranded RNA. Involved in the processing of primary rRNA transcript to yield the immediate precursors to the large and small rRNAs (23S and 16S). Processes some mRNAs, and tRNAs when they are encoded in the rRNA operon. Processes pre-crRNA and tracrRNA of type II CRISPR loci if present in the organism. The chain is Ribonuclease 3 from Nitrobacter winogradskyi (strain ATCC 25391 / DSM 10237 / CIP 104748 / NCIMB 11846 / Nb-255).